Consider the following 276-residue polypeptide: MDWILICKALILGVVEGLTEFLPVSSTGHLIVAGSFLNFNDSHAKTFDVVIQFGAILAVCWEYRQRIVSVVSGLPSRPDAQRFTLNVVIATIPAIALGLLFEKKIKAVLFSPVPVAFALVVGGAIILWAEARQRERSEPPRVMSVDALTPLDALKVGIAQCFALVPGMSRSGSTIIGGMLFGLDRRVATEFSFFLAIPIIFGATLYETVKDWQAFTVDSLGLFALGLVAAFVSAFVCVRWLLRYVATHDFTVFAWYRIAFGLFVLLVGYSGWLNWA.

5 consecutive transmembrane segments (helical) span residues 83 to 103, 108 to 128, 187 to 207, 217 to 237, and 252 to 272; these read FTLN…LFEK, VLFS…IILW, VATE…TLYE, VDSL…AFVC, and VFAW…YSGW.

The protein belongs to the UppP family.

Its subcellular location is the cell inner membrane. The enzyme catalyses di-trans,octa-cis-undecaprenyl diphosphate + H2O = di-trans,octa-cis-undecaprenyl phosphate + phosphate + H(+). Functionally, catalyzes the dephosphorylation of undecaprenyl diphosphate (UPP). Confers resistance to bacitracin. This chain is Undecaprenyl-diphosphatase 1, found in Burkholderia cenocepacia (strain HI2424).